A 437-amino-acid polypeptide reads, in one-letter code: mRNA cleavage and polyadenylation factor CLP1 (437 aa).

Residues Glu-23 and 122–127 contribute to the ATP site; that span reads STGKSS.

Belongs to the Clp1 family. Clp1 subfamily. Component of a pre-mRNA cleavage factor complex. Interacts directly with PCF11.

It is found in the nucleus. Its function is as follows. Required for endonucleolytic cleavage during polyadenylation-dependent pre-mRNA 3'-end formation. The protein is mRNA cleavage and polyadenylation factor CLP1 of Kluyveromyces lactis (strain ATCC 8585 / CBS 2359 / DSM 70799 / NBRC 1267 / NRRL Y-1140 / WM37) (Yeast).